The chain runs to 672 residues: Zinc finger and BTB domain-containing protein 24 (672 aa).

In terms of domain architecture, BTB spans 39–105 (CDITLIVEDV…MYSAVVLVDE (67 aa)). Positions 136–208 (HMQVKRKRGR…GKRKIKQPIR (73 aa)) are disordered. Residues 140-152 (KRKRGRPKKNQDL) constitute a DNA-binding region (a.T hook 1). The segment covering 148 to 158 (KNQDLSQKENP) has biased composition (basic and acidic residues). Residues 160 to 171 (SELQAQTSSEIQ) are compositionally biased toward polar residues. A compositionally biased stretch (basic residues) spans 198 to 208 (EGKRKIKQPIR). A DNA-binding region (a.T hook 2) is located at residues 223–235 (PGKRGRRRKYPDT). 8 consecutive C2H2-type zinc fingers follow at residues 237-259 (ARCE…QRTH), 265-287 (FRCS…QRMH), 293-315 (YICT…MNLH), 321-343 (FTCE…NRVH), 349-371 (PECA…LRTH), 377-399 (FTCE…IRIH), 405-427 (YVCK…EVSH), and 433-455 (FSCS…IKTH). The tract at residues 453–492 (KTHNKENPPAQAESTDKPPQSAPEQQEQEQQQQQQTSGDK) is disordered. Low complexity predominate over residues 476–487 (EQQEQEQQQQQQ).

The protein belongs to the krueppel C2H2-type zinc-finger protein family.

The protein resides in the nucleus. Functionally, may be involved in BMP2-induced transcription. The sequence is that of Zinc finger and BTB domain-containing protein 24 (zbtb24) from Danio rerio (Zebrafish).